A 283-amino-acid chain; its full sequence is V-set domain containing T-cell activation inhibitor 1 (283 aa).

An N-terminal signal peptide occupies residues 1 to 24 (MASLGQIIFWSIINIIIILAGAIA). Ig-like V-type domains lie at 35–144 (HFIT…ANLE) and 153–241 (PEIN…IKVT). 2 disulfides stabilise this stretch: cysteine 56/cysteine 130 and cysteine 168/cysteine 225. Residue asparagine 216 is glycosylated (N-linked (GlcNAc...) asparagine). Residue glycine 257 is the site of GPI-anchor amidated glycine attachment. Residues 258 to 283 (PSPCVFSSAFVAGWALLSLSCCLMLR) constitute a propeptide, removed in mature form.

It belongs to the immunoglobulin superfamily. BTN/MOG family. Post-translationally, N-glycosylated. As to expression, expressed on the surface of professional antigen-presenting cells (at protein level). Widely expressed, including in kidney, liver, lung, pancreas, placenta, prostate, spleen, testis and thymus.

It localises to the cell membrane. In terms of biological role, negatively regulates T-cell-mediated immune response by inhibiting T-cell activation, proliferation, cytokine production and development of cytotoxicity. When expressed on the cell surface of tumor macrophages, plays an important role, together with regulatory T-cells (Treg), in the suppression of tumor-associated antigen-specific T-cell immunity. Involved in promoting epithelial cell transformation. The polypeptide is V-set domain containing T-cell activation inhibitor 1 (Mus musculus (Mouse)).